Reading from the N-terminus, the 89-residue chain is Cornifin-B (89 aa).

The segment at 1–29 (MSSQQQKQPCTPPPQLQQQQVKQPCQPPP) is disordered. A run of 8 repeats spans residues 3-14 (SQQQKQPCTPPP), 18-29 (QQQVKQPCQPPP), 31-38 (EPCIPKTK), 39-46 (EPCHPKVP), 47-54 (EPCHPKVP), 55-62 (EPCQPKVP), 63-70 (EPCHPKVP), and 71-78 (EPCPSIVT). A 2 X 12 AA approximate repeats region spans residues 3–29 (SQQQKQPCTPPPQLQQQQVKQPCQPPP). Residues 31–78 (EPCIPKTKEPCHPKVPEPCHPKVPEPCQPKVPEPCHPKVPEPCPSIVT) are 6 X 8 AA approximate tandem repeats.

The protein belongs to the cornifin (SPRR) family. The N-terminus is blocked. Suprabasal layers of squamous-differentiated tissues such as epidermis, esophagus, tongue and trachea.

The protein localises to the cytoplasm. Cross-linked envelope protein of keratinocytes. It is a keratinocyte protein that first appears in the cell cytosol, but ultimately becomes cross-linked to membrane proteins by transglutaminase. All that results in the formation of an insoluble envelope beneath the plasma membrane. Can function as both amine donor and acceptor in transglutaminase-mediated cross-linkage. The sequence is that of Cornifin-B (SPRR1B) from Homo sapiens (Human).